The sequence spans 294 residues: Protease HtpX homolog (294 aa).

A run of 2 helical transmembrane segments spans residues 12-32 (VLFG…ASSF) and 34-54 (SPGV…YSYW). A Zn(2+)-binding site is contributed by H138. E139 is a catalytic residue. Zn(2+) is bound at residue H142. The next 2 membrane-spanning stretches (helical) occupy residues 152–172 (SVAG…VFFG) and 188–208 (LALL…QLAI). Position 213 (E213) interacts with Zn(2+).

The protein belongs to the peptidase M48B family. Requires Zn(2+) as cofactor.

The protein resides in the cell membrane. This is Protease HtpX homolog from Kineococcus radiotolerans (strain ATCC BAA-149 / DSM 14245 / SRS30216).